The chain runs to 251 residues: Probable transcriptional regulatory protein jk1057 (251 aa).

Positions 1 to 22 are disordered; the sequence is MAGHSKWATTKHKKAANDAKRG.

The protein belongs to the TACO1 family.

The protein resides in the cytoplasm. The sequence is that of Probable transcriptional regulatory protein jk1057 from Corynebacterium jeikeium (strain K411).